A 320-amino-acid chain; its full sequence is uncharacterized protein (320 aa).

Residues lysine 22–threonine 86 enclose the FHA domain. The disordered stretch occupies residues threonine 242–glycine 264.

This is an uncharacterized protein from Saccharomyces cerevisiae (strain ATCC 204508 / S288c) (Baker's yeast).